The sequence spans 530 residues: Light-independent protochlorophyllide reductase subunit B (530 aa).

[4Fe-4S] cluster is bound at residue Asp-36. Asp-290 acts as the Proton donor in catalysis. 425–426 (GL) is a binding site for substrate. The interval 448–483 (LGHLGGHASETKTSSKGINQSPNNHSPAGESIHWTS) is disordered. Over residues 458–473 (TKTSSKGINQSPNNHS) the composition is skewed to polar residues.

It belongs to the ChlB/BchB/BchZ family. In terms of assembly, protochlorophyllide reductase is composed of three subunits; ChlL, ChlN and ChlB. Forms a heterotetramer of two ChlB and two ChlN subunits. [4Fe-4S] cluster is required as a cofactor.

The enzyme catalyses chlorophyllide a + oxidized 2[4Fe-4S]-[ferredoxin] + 2 ADP + 2 phosphate = protochlorophyllide a + reduced 2[4Fe-4S]-[ferredoxin] + 2 ATP + 2 H2O. The protein operates within porphyrin-containing compound metabolism; chlorophyll biosynthesis (light-independent). Component of the dark-operative protochlorophyllide reductase (DPOR) that uses Mg-ATP and reduced ferredoxin to reduce ring D of protochlorophyllide (Pchlide) to form chlorophyllide a (Chlide). This reaction is light-independent. The NB-protein (ChlN-ChlB) is the catalytic component of the complex. The polypeptide is Light-independent protochlorophyllide reductase subunit B (Prochlorococcus marinus (strain SARG / CCMP1375 / SS120)).